A 245-amino-acid chain; its full sequence is Enolase-phosphatase E1 (245 aa).

The protein belongs to the HAD-like hydrolase superfamily. MasA/MtnC family. Monomer. Requires Mg(2+) as cofactor.

The catalysed reaction is 5-methylsulfanyl-2,3-dioxopentyl phosphate + H2O = 1,2-dihydroxy-5-(methylsulfanyl)pent-1-en-3-one + phosphate. The protein operates within amino-acid biosynthesis; L-methionine biosynthesis via salvage pathway; L-methionine from S-methyl-5-thio-alpha-D-ribose 1-phosphate: step 3/6. It participates in amino-acid biosynthesis; L-methionine biosynthesis via salvage pathway; L-methionine from S-methyl-5-thio-alpha-D-ribose 1-phosphate: step 4/6. Its function is as follows. Bifunctional enzyme that catalyzes the enolization of 2,3-diketo-5-methylthiopentyl-1-phosphate (DK-MTP-1-P) into the intermediate 2-hydroxy-3-keto-5-methylthiopentenyl-1-phosphate (HK-MTPenyl-1-P), which is then dephosphorylated to form the acireductone 1,2-dihydroxy-3-keto-5-methylthiopentene (DHK-MTPene). This Prochlorococcus marinus (strain MIT 9313) protein is Enolase-phosphatase E1.